The sequence spans 64 residues: UPF0337 protein SH2043 (64 aa).

The interval 1–64 (MAEDKFEQAK…DKVKGNNDNK (64 aa)) is disordered. The span at 22-64 (DNKDLEKEGQNDKASGKAKEAVENVKNKANDLIDKVKGNNDNK) shows a compositional bias: basic and acidic residues.

This sequence belongs to the UPF0337 (CsbD) family.

In Staphylococcus haemolyticus (strain JCSC1435), this protein is UPF0337 protein SH2043.